The following is an 809-amino-acid chain: Glycerol-3-phosphate acyltransferase (809 aa).

An HXXXXD motif motif is present at residues 306–311; the sequence is HRSHMD.

It belongs to the GPAT/DAPAT family.

It localises to the cell inner membrane. The catalysed reaction is sn-glycerol 3-phosphate + an acyl-CoA = a 1-acyl-sn-glycero-3-phosphate + CoA. Its pathway is phospholipid metabolism; CDP-diacylglycerol biosynthesis; CDP-diacylglycerol from sn-glycerol 3-phosphate: step 1/3. In Vibrio vulnificus (strain YJ016), this protein is Glycerol-3-phosphate acyltransferase.